A 113-amino-acid polypeptide reads, in one-letter code: Beta-microseminoprotein (113 aa).

A signal peptide spans Met1–Ala20. Disulfide bonds link Cys22–Cys69, Cys38–Cys61, Cys56–Cys92, Cys59–Cys68, and Cys83–Cys106.

The protein belongs to the beta-microseminoprotein family. Homodimer; Interacts with PI16.

The protein resides in the secreted. This is Beta-microseminoprotein (Msmb) from Rattus norvegicus (Rat).